A 501-amino-acid polypeptide reads, in one-letter code: V-type proton ATPase subunit B 2 (501 aa).

Arg392 is a binding site for ATP.

It belongs to the ATPase alpha/beta chains family. In terms of assembly, V-ATPase is a heteromultimeric enzyme made up of two complexes: the ATP-hydrolytic V1 complex and the proton translocation V0 complex. The V1 complex consists of three catalytic AB heterodimers that form a heterohexamer, three peripheral stalks each consisting of EG heterodimers, one central rotor including subunits D and F, and the regulatory subunits C and H. The proton translocation complex V0 consists of the proton transport subunit a, a ring of proteolipid subunits c9c'', rotary subunit d, subunits e and f, and the accessory subunits vah-19/Ac45 and vah-20/PRR. In terms of tissue distribution, predominantly expressed in male and hermaphrodite testis (at protein level).

The protein resides in the cytoplasm. Functionally, non-catalytic subunit of the V1 complex of vacuolar(H+)-ATPase (V-ATPase), a multisubunit enzyme composed of a peripheral complex (V1) that hydrolyzes ATP and a membrane integral complex (V0) that translocates protons. V-ATPase is responsible for acidifying and maintaining the pH of intracellular compartments and in some cell types, is targeted to the plasma membrane, where it is responsible for acidifying the extracellular environment. In neurons, required for necrotic cell death probably by promoting intracellular acidification. Required for spermatogenesis where it regulates the fibrous body-membranous organelle (FBMO) morphology in spermatocytes and the acidification of FBMO-derived secretory membranous organelles (MOs) as spermatids mature. This Caenorhabditis elegans protein is V-type proton ATPase subunit B 2.